A 177-amino-acid chain; its full sequence is MDFKQYSPEELKECSMIEVVHSVLGDKKQATTFNELVQEIAQVLGLSQEQVNAKIAQFYTDLNIDGRFINLGENRWGLRSWYPYEQIDEEILPQPKPKKKRKVEEDGFDDYIEEDEDDFDDADVNEDEDDDVEDLDKVLEEEDGDDDDLDDLDEDDDDFAEEELEYDETEEEEEEEL.

Residues 14 to 81 (CSMIEVVHSV…GENRWGLRSW (68 aa)) form the HTH HARE-type domain. Positions 90-177 (EILPQPKPKK…ETEEEEEEEL (88 aa)) are disordered. Residues 106–177 (DGFDDYIEED…ETEEEEEEEL (72 aa)) show a composition bias toward acidic residues.

The protein belongs to the RpoE family. RNAP is composed of a core of 2 alpha, a beta and a beta' subunits. The core is associated with a delta subunit and one of several sigma factors.

Functionally, participates in both the initiation and recycling phases of transcription. In the presence of the delta subunit, RNAP displays an increased specificity of transcription, a decreased affinity for nucleic acids, and an increased efficiency of RNA synthesis because of enhanced recycling. This is Probable DNA-directed RNA polymerase subunit delta from Bacillus cereus (strain B4264).